Reading from the N-terminus, the 354-residue chain is Tryptophan--tRNA ligase (354 aa).

ATP is bound by residues Gln13–Thr15 and Gly21–Asn22. A 'HIGH' region motif is present at residues Pro14 to Asn22. Asp137 is an L-tryptophan binding site. ATP contacts are provided by residues Gly149–Asp151, Val208, and Lys217–Ser221. A 'KMSKS' region motif is present at residues Lys217–Ser221.

This sequence belongs to the class-I aminoacyl-tRNA synthetase family. As to quaternary structure, homodimer.

The protein localises to the cytoplasm. It carries out the reaction tRNA(Trp) + L-tryptophan + ATP = L-tryptophyl-tRNA(Trp) + AMP + diphosphate + H(+). In terms of biological role, catalyzes the attachment of tryptophan to tRNA(Trp). In Rhizobium meliloti (strain 1021) (Ensifer meliloti), this protein is Tryptophan--tRNA ligase.